The primary structure comprises 565 residues: MFKKEPHIKALSNLKNSERKKLLQTFQKQTNNEEYSFRTSTIKQTNFNGQKSVGTVYTDENNTPILFKEKHKEQLFPTVYSCWEYPALLPIVLTHGFVIEEHLFNGANLMISGSIPPFDPRCKIGTLCGIASKQAPETVLAIGIVELDLPSFDKVIGETGVAVKIIHHFNDGLSKVFKMKLEPPFVLSTQSKDNNISSKQIESSEQIKAVEKEQEDVKEASVDVEEIAEVLDHFTVSDVDYFITRALYYTLTQDKGLELPISASNFISNHIMRNLPPIDHNEVNVKKTSWKKSAKFLKHFEKEGFLKLKGKGDDLTIVGKNTDKDELKNFVPYKLGCSKSATESRESTTSKEKTSGMMYSLTLYKPFNLAKDLLKEVNLASHTYYTSQDIRSAVSQYISVKNLADTKDKGKVIMDDLLFDMVNKKKKVLNASRIIARGEILHPLLTNNFTEFYQIFKSDDTLLFKAPMKGSLPHIKIITEMKIGRKVITRVSNFEVFQVDPESLAADLRKICSGSTTISESQTFKCAEVQVQGPHGQSIIDHLNKLGIPSKWIDFENKLKKKKRK.

Residues 89–170 form the PUA domain; that stretch reads LPIVLTHGFV…VAVKIIHHFN (82 aa). Positions 362–447 constitute an SWIB/MDM2 domain; that stretch reads TLYKPFNLAK…GEILHPLLTN (86 aa). One can recognise an SUI1 domain in the interval 475–547; sequence IKIITEMKIG…SIIDHLNKLG (73 aa).

This sequence belongs to the eIF2D family. In terms of assembly, interacts with the 40S ribosomal subunit.

The sequence is that of Translation machinery-associated protein 64 (TMA64) from Saccharomyces cerevisiae (strain ATCC 204508 / S288c) (Baker's yeast).